A 447-amino-acid polypeptide reads, in one-letter code: Argininosuccinate synthase (447 aa).

ATP contacts are provided by residues 17–25 and A43; that span reads AFSGGLDTS. L-citrulline is bound at residue Y99. G129 and T131 together coordinate ATP. Residues T131, N135, and D136 each contribute to the L-aspartate site. An L-citrulline-binding site is contributed by N135. D136 is an ATP binding site. L-citrulline contacts are provided by R139 and S192. Position 194 (D194) interacts with ATP. Residues T201, E203, and E280 each coordinate L-citrulline.

This sequence belongs to the argininosuccinate synthase family. Type 2 subfamily. As to quaternary structure, homotetramer.

It localises to the cytoplasm. It carries out the reaction L-citrulline + L-aspartate + ATP = 2-(N(omega)-L-arginino)succinate + AMP + diphosphate + H(+). The protein operates within amino-acid biosynthesis; L-arginine biosynthesis; L-arginine from L-ornithine and carbamoyl phosphate: step 2/3. The protein is Argininosuccinate synthase of Escherichia coli O139:H28 (strain E24377A / ETEC).